The following is a 244-amino-acid chain: Lectin (244 aa).

The disordered stretch occupies residues 1–20; the sequence is TETETTSFSIPKTDQPSSPK.

This sequence belongs to the leguminous lectin family. In terms of assembly, homodimer. In contrast to other Lathyrus lectins which are tetramer of two alpha and two beta chains.

The polypeptide is Lectin (Lathyrus sphaericus (Spring vetchling)).